The chain runs to 3034 residues: Cadherin EGF LAG seven-pass G-type receptor 1 (3034 aa).

The signal sequence occupies residues 1–29; sequence MAPSSPRVLPALVLLAAAALPALELGAAA. The Extracellular portion of the chain corresponds to 30 to 2484; that stretch reads WELRVPGGAR…REHGEVLPLK (2455 aa). Positions 222–243 are enriched in low complexity; the sequence is GTPSESPSVSPSLLNLSQPRAG. The interval 222 to 267 is disordered; sequence GTPSESPSVSPSLLNLSQPRAGVVRRSRRGTGSSTSPQFPLPSYQV. A glycan (N-linked (GlcNAc...) asparagine) is linked at N236. Cadherin domains follow at residues 261 to 368, 369 to 474, 475 to 580, 581 to 702, 703 to 804, 805 to 907, 908 to 1014, 1015 to 1116, and 1121 to 1239; these read PLPS…SPVF, EQSE…YPQF, SEKR…APIF, VSSP…DPMF, TQPV…RPVF, QSSH…APRF, LRDF…PPVF, EKDE…PPEL, and ILFN…SPLL. N-linked (GlcNAc...) asparagine glycosylation is found at N561, N649, and N793. N1129, N1154, N1228, N1264, N1274, and N1302 each carry an N-linked (GlcNAc...) asparagine glycan. Residues 1318 to 1376 enclose the EGF-like 1; calcium-binding domain; the sequence is DDNICLREPCENYMKCVSVLRFDSSAPFISSTTVLFRPIHPITGLRCRCPPGFTGDYCE. 9 disulfides stabilise this stretch: C1322/C1333, C1327/C1364, C1366/C1375, C1382/C1393, C1387/C1402, C1404/C1413, C1422/C1433, C1427/C1443, and C1445/C1455. Positions 1378-1414 constitute an EGF-like 2; calcium-binding domain; that stretch reads EIDLCYSNPCGANGRCRSREGGYTCECFEDFTGEHCQ. Residues 1418–1456 form the EGF-like 3; calcium-binding domain; that stretch reads RSGRCASGVCKNGGTCVNLLIGGFHCVCPPGEYEHPYCE. One can recognise a Laminin G-like 1 domain in the interval 1457–1661; the sequence is VSTRSFPPQS…IANNGTRAGC (205 aa). N-linked (GlcNAc...) asparagine glycosylation is found at N1591, N1638, and N1655. 13 disulfides stabilise this stretch: C1635–C1661, C1668–C1679, C1673–C1688, C1690–C1699, C1855–C1885, C1891–C1902, C1896–C1911, C1913–C1922, C1926–C1937, C1931–C1949, C1951–C1960, C1968–C1981, and C1983–C1993. The EGF-like 4; calcium-binding domain maps to 1664–1700; the sequence is QRNFCDGTSCQNGGTCVNRWNTYLCECPLRFGGKNCE. Position 1681 is a (3R)-3-hydroxyasparagine (N1681). A Laminin G-like 2 domain is found at 1704 to 1885; it reads PHPQRFTGES…ALKVRVKDGC (182 aa). Residues 1887–1922 form the EGF-like 5; calcium-binding domain; it reads VEDPCASSPCPPHSHCRDTWDSYSCICDRGYFGKKC. Position 1904 is a (3R)-3-hydroxyaspartate (D1904). The region spanning 1923 to 1961 is the EGF-like 6; calcium-binding domain; it reads VDACLLNPCKHVAACVRSPNTPRGYSCECGPGHYGQYCE. Residues 1962–1994 enclose the EGF-like 7; calcium-binding domain; it reads NKVDLPCPKGWWGNPVCGPCHCAVSQGFDPDCN. Residue N1994 is glycosylated (N-linked (GlcNAc...) asparagine). In terms of domain architecture, EGF-like 8; calcium-binding spans 1996 to 2031; the sequence is TNGQCQCKENYYKPPAQDACLPCDCFPHGSHSRACD. Disulfide bonds link C2000/C2015, C2002/C2018, C2020/C2030, C2039/C2048, and C2051/C2063. In terms of domain architecture, Laminin EGF-like spans 2018-2065; that stretch reads CDCFPHGSHSRACDMDTGQCACKPGVIGRQCNRCDNPFAEVTSLGCEV. N-linked (GlcNAc...) asparagine glycosylation is found at N2118, N2137, N2144, N2155, N2160, and N2272. The tract at residues 2295-2346 is disordered; the sequence is SVSFPADTFKPPEKKEGPVVRLTNRRTTPLTAQPEPRAERETSSSRRRRHPD. The GAIN-B domain maps to 2312–2476; it reads PVVRLTNRRT…AVLMDISRRE (165 aa). 2 disulfide bridges follow: C2426–C2458 and C2446–C2460. The interval 2426-2476 is GPS; that stretch reads CVFWNHSLDTGGTGGWSAKGCELLSRNRTHVTCQCSHSASCAVLMDISRRE. N2430 and N2452 each carry an N-linked (GlcNAc...) asparagine glycan. A helical transmembrane segment spans residues 2485–2505; it reads IITYAALSLSLVALLVAFVLL. Residues 2506–2516 are Cytoplasmic-facing; the sequence is SLVRTLRSNLH. The chain crosses the membrane as a helical span at residues 2517–2537; sequence SIHKNLITALFFSQLIFMVGI. N-linked (GlcNAc...) asparagine glycosylation occurs at N2538. At 2538 to 2542 the chain is on the extracellular side; the sequence is NQTEN. Residues 2543–2563 form a helical membrane-spanning segment; sequence PFLCTVVAILLHYVSMGTFAW. At 2564 to 2587 the chain is on the cytoplasmic side; the sequence is TLVENLHVYRMLTEVRNIDTGPMR. A helical membrane pass occupies residues 2588-2608; it reads FYHVVGWGIPAIVTGLAVGLD. The Extracellular segment spans residues 2609 to 2625; sequence PQGYGNPDFCWLSLQDT. Residues 2626–2646 traverse the membrane as a helical segment; that stretch reads LIWSFAGPVGTVIIINTVIFV. Over 2647 to 2670 the chain is Cytoplasmic; it reads LSAKVSCQRKHHYYERKGVVSMLR. The helical transmembrane segment at 2671–2691 threads the bilayer; that stretch reads TAFLLLLLVTATWLLGLLAVN. Over 2692–2694 the chain is Extracellular; the sequence is SDT. A helical membrane pass occupies residues 2695 to 2715; that stretch reads LSFHYLFAAFSCLQGIFVLLF. Over 2716–3034 the chain is Cytoplasmic; the sequence is HCVAHREVRK…QANGSDSEKP (319 aa). Residues 2774–3034 form a disordered region; the sequence is TASLDSTTRD…QANGSDSEKP (261 aa). A phosphoserine mark is found at S2776, S2779, S2886, and S2888. Over residues 2893–2909 the composition is skewed to basic and acidic residues; it reads TEPHLKVETKVSVELHR. Positions 2976–2986 are enriched in low complexity; sequence SPTSSRTSSLG. Residues 3003–3012 are compositionally biased toward basic and acidic residues; the sequence is PRREPGREHL. Residues 3020 to 3034 show a composition bias toward polar residues; sequence RTGSAQANGSDSEKP.

The protein belongs to the G-protein coupled receptor 2 family. LN-TM7 subfamily. In terms of processing, the iron and 2-oxoglutarate dependent 3-hydroxylation of aspartate and asparagine is (R) stereospecific within EGF domains. Expressed in the brain, where it is localized principally in the ependymal cell layer, choroid plexus and the area postrema. Also found in spinal cord and in the eye.

Its subcellular location is the cell membrane. Its function is as follows. Receptor that may have an important role in cell/cell signaling during nervous system formation. This is Cadherin EGF LAG seven-pass G-type receptor 1 (Celsr1) from Mus musculus (Mouse).